Reading from the N-terminus, the 34-residue chain is Corticostatin-2 (34 aa).

3 disulfide bridges follow: C3–C32, C5–C21, and C11–C31.

Belongs to the alpha-defensin family.

Its subcellular location is the secreted. Functionally, microbicidal activity and inhibits corticotropin (ACTH) stimulated corticosterone production. The sequence is that of Corticostatin-2 from Oryctolagus cuniculus (Rabbit).